The following is a 152-amino-acid chain: Zinc finger SWIM domain-containing protein 7 (152 aa).

An SWIM-type zinc finger spans residues 76–114 (YTCLASCHYCSCPAFSFSVLRKSDSLLCKHLLAIYLSQL).

The protein belongs to the SWS1 family. As to quaternary structure, interacts with RAD51D and XRCC3; involved in homologous recombination repair. Interacts with SWSAP1; they form a functional complex involved in homologous recombination repair and stabilize each other.

The protein localises to the nucleus. Its function is as follows. Involved in early stages of the homologous recombination repair (HRR) pathway of double-stranded DNA breaks arising during DNA replication or induced by DNA-damaging agents. Required for meiotic progression, hence for fertility. In Mus musculus (Mouse), this protein is Zinc finger SWIM domain-containing protein 7 (Zswim7).